Consider the following 636-residue polypeptide: Threonine--tRNA ligase (636 aa).

One can recognise a TGS domain in the interval 1 to 61 (MPVITLPDGS…TQDVSLSIIT (61 aa)). A catalytic region spans residues 242-533 (DHRKLGKKFD…LIEEYEGAFP (292 aa)). C333, H384, and H510 together coordinate Zn(2+).

Belongs to the class-II aminoacyl-tRNA synthetase family. Homodimer. Zn(2+) serves as cofactor.

It is found in the cytoplasm. It carries out the reaction tRNA(Thr) + L-threonine + ATP = L-threonyl-tRNA(Thr) + AMP + diphosphate + H(+). In terms of biological role, catalyzes the attachment of threonine to tRNA(Thr) in a two-step reaction: L-threonine is first activated by ATP to form Thr-AMP and then transferred to the acceptor end of tRNA(Thr). Also edits incorrectly charged L-seryl-tRNA(Thr). The chain is Threonine--tRNA ligase from Saccharophagus degradans (strain 2-40 / ATCC 43961 / DSM 17024).